The sequence spans 645 residues: Chaperone protein DnaK (645 aa).

At threonine 199 the chain carries Phosphothreonine; by autocatalysis. 2 disordered regions span residues 509 to 530 (GALSDSDIEQMQKDAEANAEED) and 615 to 645 (EAGADAAGAAGATAGGGDDDDAIDAEFEVKE). Positions 518–530 (QMQKDAEANAEED) are enriched in basic and acidic residues. Low complexity predominate over residues 615 to 626 (EAGADAAGAAGA). Acidic residues predominate over residues 631–645 (GDDDDAIDAEFEVKE).

This sequence belongs to the heat shock protein 70 family.

Acts as a chaperone. In Rhodopirellula baltica (strain DSM 10527 / NCIMB 13988 / SH1), this protein is Chaperone protein DnaK.